Consider the following 101-residue polypeptide: NAD(P)H-quinone oxidoreductase subunit 4L, chloroplastic (101 aa).

Transmembrane regions (helical) follow at residues 2-22, 32-52, and 61-81; these read MLEHILVLSAYLFSIGIYGLI, MCLELIFNSVNINFVTFSGFF, and IFSVFVFAIAAAEAAIGLAIV.

Belongs to the complex I subunit 4L family. NDH is composed of at least 16 different subunits, 5 of which are encoded in the nucleus.

The protein resides in the plastid. It localises to the chloroplast thylakoid membrane. It catalyses the reaction a plastoquinone + NADH + (n+1) H(+)(in) = a plastoquinol + NAD(+) + n H(+)(out). The enzyme catalyses a plastoquinone + NADPH + (n+1) H(+)(in) = a plastoquinol + NADP(+) + n H(+)(out). NDH shuttles electrons from NAD(P)H:plastoquinone, via FMN and iron-sulfur (Fe-S) centers, to quinones in the photosynthetic chain and possibly in a chloroplast respiratory chain. The immediate electron acceptor for the enzyme in this species is believed to be plastoquinone. Couples the redox reaction to proton translocation, and thus conserves the redox energy in a proton gradient. This Jasminum nudiflorum (Winter jasmine) protein is NAD(P)H-quinone oxidoreductase subunit 4L, chloroplastic.